The chain runs to 287 residues: Probable endonuclease 4 (287 aa).

The Zn(2+) site is built by His69, His109, Glu144, Asp178, His181, His215, Asp228, His230, and Glu260.

The protein belongs to the AP endonuclease 2 family. The cofactor is Zn(2+).

It catalyses the reaction Endonucleolytic cleavage to 5'-phosphooligonucleotide end-products.. Endonuclease IV plays a role in DNA repair. It cleaves phosphodiester bonds at apurinic or apyrimidinic (AP) sites, generating a 3'-hydroxyl group and a 5'-terminal sugar phosphate. This Thermotoga petrophila (strain ATCC BAA-488 / DSM 13995 / JCM 10881 / RKU-1) protein is Probable endonuclease 4.